Here is an 82-residue protein sequence, read N- to C-terminus: Small ribosomal subunit protein bS18 (82 aa).

Residues 1-20 are disordered; the sequence is MSEINQTVTRRPFHRRRKTC.

The protein belongs to the bacterial ribosomal protein bS18 family. As to quaternary structure, part of the 30S ribosomal subunit. Forms a tight heterodimer with protein bS6.

Binds as a heterodimer with protein bS6 to the central domain of the 16S rRNA, where it helps stabilize the platform of the 30S subunit. The chain is Small ribosomal subunit protein bS18 from Bartonella quintana (strain Toulouse) (Rochalimaea quintana).